Here is a 218-residue protein sequence, read N- to C-terminus: Protein OPG170 (218 aa).

Positions 1-16 (MYSLVFVILMCIPFSF) are cleaved as a signal peptide. An N-linked (GlcNAc...) asparagine; by host glycan is attached at asparagine 70.

It belongs to the orthopoxvirus OPG170 family.

It is found in the secreted. Its function is as follows. May interact with several cellular chemokines to interfere with chemokine-glycosaminoglycan (GAG) interactions at the cell surface to alter chemotaxis of nearby responsive cells. This Homo sapiens (Human) protein is Protein OPG170 (OPG170).